The primary structure comprises 505 residues: Transcription factor VHR2 (505 aa).

Residues methionine 1 to histidine 16 show a composition bias toward basic and acidic residues. Disordered regions lie at residues methionine 1–glycine 23, asparagine 105–proline 179, and glutamine 421–alanine 460. The span at proline 133–serine 148 shows a compositional bias: low complexity. Residues glutamine 421–alanine 443 are compositionally biased toward polar residues.

It belongs to the VHR1 family.

The protein resides in the nucleus. Functionally, transcription factor that regulates ERG9, but seems to have a more global function in transcription. The sequence is that of Transcription factor VHR2 (VHR2) from Saccharomyces cerevisiae (strain ATCC 204508 / S288c) (Baker's yeast).